The sequence spans 334 residues: D-alanine--D-alanine ligase (334 aa).

Residues 121–327 enclose the ATP-grasp domain; the sequence is KLWYDALDIP…FSEFLVQCVT (207 aa). 151–206 is an ATP binding site; sequence AFGHWGSIFVKAARQGSSVGCYKVTTEDQIAPAIEAAFGFSEQVLVEQAVKPRELE. Positions 281, 294, and 296 each coordinate Mg(2+).

Belongs to the D-alanine--D-alanine ligase family. Mg(2+) serves as cofactor. Mn(2+) is required as a cofactor.

Its subcellular location is the cytoplasm. The enzyme catalyses 2 D-alanine + ATP = D-alanyl-D-alanine + ADP + phosphate + H(+). It functions in the pathway cell wall biogenesis; peptidoglycan biosynthesis. Its function is as follows. Cell wall formation. The sequence is that of D-alanine--D-alanine ligase from Vibrio cholerae serotype O1 (strain ATCC 39315 / El Tor Inaba N16961).